Reading from the N-terminus, the 208-residue chain is MLKKPIIIGVTGGSGGGKTSVSRAILDSFPNARIAMIQHDSYYKDQSHMSFEERVKTNYDHPLAFDTDFMIQQLKELLAGRPVDIPIYDYKKHTRSNTTFRQDPQDVIIVEGILVLEDERLRDLMDIKLFVDTDDDIRIIRRIKRDMMERGRSLESIIDQYTSVVKPMYHQFIEPSKRYADIVIPEGVSNVVAIDVINSKIASILGEV.

Gly12–Thr19 contributes to the ATP binding site.

Belongs to the uridine kinase family.

The protein resides in the cytoplasm. The enzyme catalyses uridine + ATP = UMP + ADP + H(+). It catalyses the reaction cytidine + ATP = CMP + ADP + H(+). It participates in pyrimidine metabolism; CTP biosynthesis via salvage pathway; CTP from cytidine: step 1/3. It functions in the pathway pyrimidine metabolism; UMP biosynthesis via salvage pathway; UMP from uridine: step 1/1. The chain is Uridine kinase from Streptococcus pyogenes serotype M3 (strain ATCC BAA-595 / MGAS315).